The chain runs to 37 residues: Neuropeptide Y1-like conopeptide (37 aa).

F37 bears the Phenylalanine amide mark.

It belongs to the NPY family. In terms of tissue distribution, expressed by the venom duct.

It localises to the secreted. In terms of biological role, causes hyperactivity such as jumping, rapid circling and tail flicking, when intraventricularly injected into mice brain. The chain is Neuropeptide Y1-like conopeptide from Conus betulinus (Beech cone).